A 338-amino-acid polypeptide reads, in one-letter code: Tagatose 1,6-diphosphate aldolase (338 aa).

Belongs to the aldolase LacD family.

The catalysed reaction is D-tagatofuranose 1,6-bisphosphate = D-glyceraldehyde 3-phosphate + dihydroxyacetone phosphate. It participates in carbohydrate metabolism; D-tagatose 6-phosphate degradation; D-glyceraldehyde 3-phosphate and glycerone phosphate from D-tagatose 6-phosphate: step 2/2. The polypeptide is Tagatose 1,6-diphosphate aldolase (Listeria innocua serovar 6a (strain ATCC BAA-680 / CLIP 11262)).